Reading from the N-terminus, the 122-residue chain is N(2)-fixation sustaining protein CowN (122 aa).

Belongs to the CowN family.

Its function is as follows. Is required to sustain N(2)-dependent growth in the presence of low levels of carbon monoxide (CO). Probably acts by protecting the N(2) fixation ability of the nitrogenase complex, which is inactivated in the presence of CO. This chain is N(2)-fixation sustaining protein CowN, found in Azorhizobium caulinodans (strain ATCC 43989 / DSM 5975 / JCM 20966 / LMG 6465 / NBRC 14845 / NCIMB 13405 / ORS 571).